The chain runs to 199 residues: UPF0301 protein Vapar_4617 (199 aa).

Belongs to the UPF0301 (AlgH) family.

The sequence is that of UPF0301 protein Vapar_4617 from Variovorax paradoxus (strain S110).